Reading from the N-terminus, the 239-residue chain is tRNA (guanine-N(7)-)-methyltransferase (239 aa).

Positions 68, 93, 120, and 143 each coordinate S-adenosyl-L-methionine. The active site involves Asp143. Residues Lys147, Asp180, and Thr217 to Glu220 each bind substrate.

This sequence belongs to the class I-like SAM-binding methyltransferase superfamily. TrmB family.

The enzyme catalyses guanosine(46) in tRNA + S-adenosyl-L-methionine = N(7)-methylguanosine(46) in tRNA + S-adenosyl-L-homocysteine. Its pathway is tRNA modification; N(7)-methylguanine-tRNA biosynthesis. Catalyzes the formation of N(7)-methylguanine at position 46 (m7G46) in tRNA. In Vibrio cholerae serotype O1 (strain ATCC 39541 / Classical Ogawa 395 / O395), this protein is tRNA (guanine-N(7)-)-methyltransferase.